The sequence spans 252 residues: Ciliogenesis and planar polarity effector 2 (252 aa).

The segment at 46–252 (QMNVDLVRYK…LRETSSEIIV (207 aa)) is small GTPase-like. GTP is bound by residues 62-67 (TGVGKS) and 173-176 (TKFD).

It belongs to the small GTPase superfamily. Rab family.

It is found in the cytoplasm. Its subcellular location is the cytoskeleton. It localises to the cilium basal body. In terms of biological role, potential effector of the planar cell polarity signaling pathway. Plays a role in targeted membrane trafficking most probably at the level of vesicle fusion with membranes. Involved in cilium biogenesis by regulating the transport of cargo proteins to the basal body and to the apical tips of cilia. More generally involved in exocytosis in secretory cells. In Danio rerio (Zebrafish), this protein is Ciliogenesis and planar polarity effector 2 (cplane2).